We begin with the raw amino-acid sequence, 122 residues long: MIQPQTHLNVADNSGARELMCIRIIGASNRRYAHIGDIIVAVIKEAVPNMPLERSEVVRAVIVRTCKELKRDNGMIIRYDDNAAVVIDKEGNPKGTRIFGAIARELRQFNFTKIVSLAPEVL.

Belongs to the universal ribosomal protein uL14 family. As to quaternary structure, part of the 50S ribosomal subunit.

It localises to the plastid. The protein localises to the chloroplast. In terms of biological role, binds to 23S rRNA. This is Large ribosomal subunit protein uL14c from Ipomoea purpurea (Common morning glory).